An 821-amino-acid polypeptide reads, in one-letter code: DNA replication licensing factor MCM6 (821 aa).

Met-1 bears the N-acetylmethionine mark. Phosphoserine occurs at positions 13, 219, and 271. At Thr-278 the chain carries Phosphothreonine. The MCM domain occupies 346–553 (LYHNLCTSLF…TDYAIARRIV (208 aa)). The ATP site is built by His-359, Ser-399, Thr-400, Ala-401, Lys-402, Ser-403, and Asn-504. The Arginine finger signature appears at 528–531 (SRFD). Positions 619 and 622 each coordinate ADP. Lys-643 bears the N6-acetyllysine mark. The segment at 676-708 (TDEGQGGVNGHADSPAPVNRFNGSSEDASQETV) is disordered. Ser-689, Ser-704, and Ser-762 each carry phosphoserine. The segment covering 696–708 (FNGSSEDASQETV) has biased composition (polar residues). Position 791 is a phosphothreonine (Thr-791).

The protein belongs to the MCM family. Component of the MCM2-7 complex. The complex forms a toroidal hexameric ring with the proposed subunit order MCM2-MCM6-MCM4-MCM7-MCM3-MCM5. Component of the CMG helicase complex, a hexameric ring of related MCM2-7 subunits stabilized by CDC45 and the tetrameric GINS complex. May interact with MCM10. Interacts with TIPIN. Interacts with CDT1. Interacts with MCMBP. Interacts with DDI2. In terms of processing, O-glycosylated (O-GlcNAcylated), in a cell cycle-dependent manner.

It localises to the nucleus. It is found in the chromosome. It catalyses the reaction ATP + H2O = ADP + phosphate + H(+). Acts as a component of the MCM2-7 complex (MCM complex) which is the replicative helicase essential for 'once per cell cycle' DNA replication initiation and elongation in eukaryotic cells. Core component of CDC45-MCM-GINS (CMG) helicase, the molecular machine that unwinds template DNA during replication, and around which the replisome is built. The active ATPase sites in the MCM2-7 ring are formed through the interaction surfaces of two neighboring subunits such that a critical structure of a conserved arginine finger motif is provided in trans relative to the ATP-binding site of the Walker A box of the adjacent subunit. The six ATPase active sites, however, are likely to contribute differentially to the complex helicase activity. This chain is DNA replication licensing factor MCM6 (Mcm6), found in Mus musculus (Mouse).